The chain runs to 248 residues: 4-hydroxy-tetrahydrodipicolinate reductase (248 aa).

D28 lines the NAD(+) pocket. K29 contributes to the NADP(+) binding site. NAD(+) is bound by residues 78–80 (ATT) and 102–105 (SYNM). Residue H134 is the Proton donor/acceptor of the active site. (S)-2,3,4,5-tetrahydrodipicolinate is bound at residue H135. The Proton donor role is filled by K138. 144 to 145 (GT) contributes to the (S)-2,3,4,5-tetrahydrodipicolinate binding site.

Belongs to the DapB family.

Its subcellular location is the cytoplasm. The catalysed reaction is (S)-2,3,4,5-tetrahydrodipicolinate + NAD(+) + H2O = (2S,4S)-4-hydroxy-2,3,4,5-tetrahydrodipicolinate + NADH + H(+). The enzyme catalyses (S)-2,3,4,5-tetrahydrodipicolinate + NADP(+) + H2O = (2S,4S)-4-hydroxy-2,3,4,5-tetrahydrodipicolinate + NADPH + H(+). It participates in amino-acid biosynthesis; L-lysine biosynthesis via DAP pathway; (S)-tetrahydrodipicolinate from L-aspartate: step 4/4. Functionally, catalyzes the conversion of 4-hydroxy-tetrahydrodipicolinate (HTPA) to tetrahydrodipicolinate. This is 4-hydroxy-tetrahydrodipicolinate reductase from Exiguobacterium sibiricum (strain DSM 17290 / CCUG 55495 / CIP 109462 / JCM 13490 / 255-15).